We begin with the raw amino-acid sequence, 178 residues long: Ribosome maturation factor RimM (178 aa).

A PRC barrel domain is found at 101–178; it reads EGEFYWYQLQ…EMRVDWDADF (78 aa).

It belongs to the RimM family. In terms of assembly, binds ribosomal protein uS19.

It is found in the cytoplasm. Functionally, an accessory protein needed during the final step in the assembly of 30S ribosomal subunit, possibly for assembly of the head region. Essential for efficient processing of 16S rRNA. May be needed both before and after RbfA during the maturation of 16S rRNA. It has affinity for free ribosomal 30S subunits but not for 70S ribosomes. This chain is Ribosome maturation factor RimM, found in Ectopseudomonas mendocina (strain ymp) (Pseudomonas mendocina).